The chain runs to 83 residues: uncharacterized protein (83 aa).

3 helical membrane-spanning segments follow: residues 7–26 (FARF…IVSY), 36–58 (LSPL…ILPF), and 65–82 (ILTV…YLAF).

It is found in the cell membrane. This is an uncharacterized protein from Archaeoglobus fulgidus (strain ATCC 49558 / DSM 4304 / JCM 9628 / NBRC 100126 / VC-16).